The following is a 100-amino-acid chain: Large ribosomal subunit protein bL21 (100 aa).

It belongs to the bacterial ribosomal protein bL21 family. In terms of assembly, part of the 50S ribosomal subunit. Contacts protein L20.

Functionally, this protein binds to 23S rRNA in the presence of protein L20. This is Large ribosomal subunit protein bL21 from Corynebacterium jeikeium (strain K411).